Here is a 210-residue protein sequence, read N- to C-terminus: C4-dicarboxylate TRAP transporter small permease protein DctQ (210 aa).

Transmembrane regions (helical) follow at residues 13–33 (EGLI…YVVL), 77–97 (ALFA…AGHL), 113–133 (VLGV…CVAS), and 160–180 (IGLI…EILV).

Belongs to the TRAP transporter small permease family. In terms of assembly, the complex comprises the extracytoplasmic solute receptor protein DctP, and the two transmembrane proteins DctQ and DctM.

It is found in the cell inner membrane. Functionally, part of the tripartite ATP-independent periplasmic (TRAP) transport system DctPQM involved in C4-dicarboxylates uptake. This Pseudomonas aeruginosa (strain ATCC 15692 / DSM 22644 / CIP 104116 / JCM 14847 / LMG 12228 / 1C / PRS 101 / PAO1) protein is C4-dicarboxylate TRAP transporter small permease protein DctQ.